We begin with the raw amino-acid sequence, 325 residues long: Collagen alpha-1(IX) chain (325 aa).

Low complexity predominate over residues 1-54; sequence PGQLGNSGKPGQQGPPGEVGPRGPRGLPGSRGPVGPEGSPGIPGKLGPLGSPGL. 2 disordered regions span residues 1 to 163 and 187 to 325; these read PGQL…APTD and RPDT…GPDK. Over residues 198-208 the composition is skewed to pro residues; it reads RPGPPGPPGPP. The segment covering 237–249 has biased composition (basic and acidic residues); it reads PKGDLGEKGERGP. The segment covering 292–304 has biased composition (pro residues); sequence VPGPPGPPGPPGF.

It belongs to the fibril-associated collagens with interrupted helices (FACIT) family. In terms of assembly, heterotrimer of an alpha 1(IX), an alpha 2(IX) and an alpha 3(IX) chain. In terms of processing, covalently linked to the telopeptides of type II collagen by lysine-derived cross-links. Post-translationally, prolines at the third position of the tripeptide repeating unit (G-X-Y) are hydroxylated in some or all of the chains.

Its subcellular location is the secreted. It localises to the extracellular space. The protein resides in the extracellular matrix. Functionally, structural component of hyaline cartilage and vitreous of the eye. The chain is Collagen alpha-1(IX) chain (Col9a1) from Rattus norvegicus (Rat).